A 224-amino-acid polypeptide reads, in one-letter code: Ribonuclease T (224 aa).

Residues 1–11 show a composition bias toward acidic residues; that stretch reads MSEDLYEDDQD. Positions 1–20 are disordered; sequence MSEDLYEDDQDSQVSSGSRH. The 175-residue stretch at 32–206 folds into the Exonuclease domain; the sequence is VVVDVETGGF…YDTEKTAELF (175 aa). Residues Asp35, Glu37, His193, and Asp198 each contribute to the Mg(2+) site. His193 (proton donor/acceptor) is an active-site residue.

The protein belongs to the RNase T family. In terms of assembly, homodimer. It depends on Mg(2+) as a cofactor.

In terms of biological role, trims short 3' overhangs of a variety of RNA species, leaving a one or two nucleotide 3' overhang. Responsible for the end-turnover of tRNA: specifically removes the terminal AMP residue from uncharged tRNA (tRNA-C-C-A). Also appears to be involved in tRNA biosynthesis. In Pseudomonas entomophila (strain L48), this protein is Ribonuclease T.